A 431-amino-acid polypeptide reads, in one-letter code: Serine/threonine-protein kinase Sgk1 (431 aa).

Residues 58–93 (LNLTPPQDPELMNSNPSPPPSPSQQINLGPSSNPSA) form a disordered region. The segment covering 81-93 (QQINLGPSSNPSA) has biased composition (polar residues). Positions 98-355 (FHFLKVIGKG…FTEIKNHVFF (258 aa)) constitute a Protein kinase domain. Residues 104 to 112 (IGKGSFGKV) and Lys-127 contribute to the ATP site. Catalysis depends on Asp-222, which acts as the Proton acceptor. Residues 356 to 431 (SPINWDDLNA…SYAPSMDSYL (76 aa)) form the AGC-kinase C-terminal domain.

The protein belongs to the protein kinase superfamily. AGC Ser/Thr protein kinase family.

It localises to the cytoplasm. Its subcellular location is the nucleus. The protein localises to the endoplasmic reticulum. The enzyme catalyses L-seryl-[protein] + ATP = O-phospho-L-seryl-[protein] + ADP + H(+). The catalysed reaction is L-threonyl-[protein] + ATP = O-phospho-L-threonyl-[protein] + ADP + H(+). Functionally, protein kinase that may play an important role in cellular stress response. May be involved in the regulation of processes such as cell survival, neuronal excitability and renal sodium excretion. In Fundulus heteroclitus (Killifish), this protein is Serine/threonine-protein kinase Sgk1 (sgk1).